A 749-amino-acid polypeptide reads, in one-letter code: 5-methyltetrahydropteroyltriglutamate--homocysteine methyltransferase (749 aa).

5-methyltetrahydropteroyltri-L-glutamate is bound by residues 18 to 21 and Lys-112; that span reads REWK. Residues 420 to 422 and Glu-473 contribute to the L-homocysteine site; that span reads IGS. L-methionine is bound by residues 420–422 and Glu-473; that span reads IGS. Trp-550 contacts 5-methyltetrahydropteroyltri-L-glutamate. Asp-588 serves as a coordination point for L-homocysteine. Asp-588 is an L-methionine binding site. A 5-methyltetrahydropteroyltri-L-glutamate-binding site is contributed by Glu-594. Zn(2+) is bound by residues His-630, Cys-632, and Glu-654. The Proton donor role is filled by His-683. Cys-715 is a Zn(2+) binding site.

Belongs to the vitamin-B12 independent methionine synthase family. It depends on Zn(2+) as a cofactor.

The catalysed reaction is 5-methyltetrahydropteroyltri-L-glutamate + L-homocysteine = tetrahydropteroyltri-L-glutamate + L-methionine. It participates in amino-acid biosynthesis; L-methionine biosynthesis via de novo pathway; L-methionine from L-homocysteine (MetE route): step 1/1. Catalyzes the transfer of a methyl group from 5-methyltetrahydrofolate to homocysteine resulting in methionine formation. The protein is 5-methyltetrahydropteroyltriglutamate--homocysteine methyltransferase of Staphylococcus haemolyticus (strain JCSC1435).